The primary structure comprises 283 residues: 4-hydroxy-3-methylbut-2-enyl diphosphate reductase (283 aa).

Cys12 is a binding site for [4Fe-4S] cluster. (2E)-4-hydroxy-3-methylbut-2-enyl diphosphate contacts are provided by His40 and His73. Positions 40 and 73 each coordinate dimethylallyl diphosphate. Residues His40 and His73 each contribute to the isopentenyl diphosphate site. Position 95 (Cys95) interacts with [4Fe-4S] cluster. His123 contributes to the (2E)-4-hydroxy-3-methylbut-2-enyl diphosphate binding site. His123 contacts dimethylallyl diphosphate. His123 provides a ligand contact to isopentenyl diphosphate. Glu125 acts as the Proton donor in catalysis. Thr161 contributes to the (2E)-4-hydroxy-3-methylbut-2-enyl diphosphate binding site. Residue Cys189 coordinates [4Fe-4S] cluster. 3 residues coordinate (2E)-4-hydroxy-3-methylbut-2-enyl diphosphate: Ser217, Asn219, and Ser261. Dimethylallyl diphosphate-binding residues include Ser217, Asn219, and Ser261. Residues Ser217, Asn219, and Ser261 each coordinate isopentenyl diphosphate.

The protein belongs to the IspH family. [4Fe-4S] cluster is required as a cofactor.

The catalysed reaction is isopentenyl diphosphate + 2 oxidized [2Fe-2S]-[ferredoxin] + H2O = (2E)-4-hydroxy-3-methylbut-2-enyl diphosphate + 2 reduced [2Fe-2S]-[ferredoxin] + 2 H(+). The enzyme catalyses dimethylallyl diphosphate + 2 oxidized [2Fe-2S]-[ferredoxin] + H2O = (2E)-4-hydroxy-3-methylbut-2-enyl diphosphate + 2 reduced [2Fe-2S]-[ferredoxin] + 2 H(+). Its pathway is isoprenoid biosynthesis; dimethylallyl diphosphate biosynthesis; dimethylallyl diphosphate from (2E)-4-hydroxy-3-methylbutenyl diphosphate: step 1/1. The protein operates within isoprenoid biosynthesis; isopentenyl diphosphate biosynthesis via DXP pathway; isopentenyl diphosphate from 1-deoxy-D-xylulose 5-phosphate: step 6/6. Catalyzes the conversion of 1-hydroxy-2-methyl-2-(E)-butenyl 4-diphosphate (HMBPP) into a mixture of isopentenyl diphosphate (IPP) and dimethylallyl diphosphate (DMAPP). Acts in the terminal step of the DOXP/MEP pathway for isoprenoid precursor biosynthesis. This chain is 4-hydroxy-3-methylbut-2-enyl diphosphate reductase, found in Geobacter sp. (strain M21).